Reading from the N-terminus, the 249-residue chain is tRNA (guanine-N(7)-)-methyltransferase (249 aa).

S-adenosyl-L-methionine contacts are provided by Glu80, Glu105, Asp132, and Asp155. The active site involves Asp155. Substrate-binding positions include Lys159, Asp191, and 228-231 (TKFE).

The protein belongs to the class I-like SAM-binding methyltransferase superfamily. TrmB family.

It carries out the reaction guanosine(46) in tRNA + S-adenosyl-L-methionine = N(7)-methylguanosine(46) in tRNA + S-adenosyl-L-homocysteine. It functions in the pathway tRNA modification; N(7)-methylguanine-tRNA biosynthesis. In terms of biological role, catalyzes the formation of N(7)-methylguanine at position 46 (m7G46) in tRNA. The chain is tRNA (guanine-N(7)-)-methyltransferase from Mannheimia succiniciproducens (strain KCTC 0769BP / MBEL55E).